A 336-amino-acid chain; its full sequence is 2-phospho-L-lactate transferase (336 aa).

Residue Asp49 coordinates 7,8-didemethyl-8-hydroxy-5-deazariboflavin.

This sequence belongs to the CofD family. As to quaternary structure, homodimer. Mg(2+) serves as cofactor.

The enzyme catalyses (2S)-lactyl-2-diphospho-5'-guanosine + 7,8-didemethyl-8-hydroxy-5-deazariboflavin = oxidized coenzyme F420-0 + GMP + H(+). The protein operates within cofactor biosynthesis; coenzyme F420 biosynthesis. Catalyzes the transfer of the 2-phospholactate moiety from (2S)-lactyl-2-diphospho-5'-guanosine to 7,8-didemethyl-8-hydroxy-5-deazariboflavin (FO) with the formation of oxidized coenzyme F420-0 and GMP. The chain is 2-phospho-L-lactate transferase from Halobacterium salinarum (strain ATCC 700922 / JCM 11081 / NRC-1) (Halobacterium halobium).